The following is a 773-amino-acid chain: Glucan endo-1,3-beta-D-glucosidase (773 aa).

The beta-sandwich subdomain stretch occupies residues 1 to 194 (MPPGAKVPQA…KNYFSIAVLP (194 aa)). The 647-residue stretch at 1–647 (MPPGAKVPQA…HWICNLDSLG (647 aa)) folds into the GH81 domain. 5 residues coordinate Mg(2+): Ile-31, Asn-34, Gln-35, Tyr-36, and Ala-89. Residues 195–288 (DNTVSTLTYY…QGTSFKTVYR (94 aa)) are alpha/beta subdomain. The tract at residues 298–647 (DKGTYDREAL…HWICNLDSLG (350 aa)) is (alpha/beta)6 barrel subdomain. Residues Tyr-327 and Lys-331 each coordinate (1,3-beta-D-glucosyl)n. Positions 365, 368, 373, and 376 each coordinate Ca(2+). Residues Asp-402 and His-406 each contribute to the (1,3-beta-D-glucosyl)n site. Asp-402 is a catalytic residue. Residues Leu-454, Arg-455, and Phe-457 each contribute to the Ca(2+) site. 3 residues coordinate (1,3-beta-D-glucosyl)n: Asn-477, Glu-479, and Glu-483. Active-site residues include Glu-479 and Glu-483. Mg(2+) contacts are provided by Lys-527, Lys-618, Asn-619, and Trp-621. Residues Asp-712, Asn-714, Asp-716, Gly-717, Lys-718, Asp-723, Asp-748, Ile-749, Asn-750, Asp-752, Lys-754, and Asp-759 each contribute to the Ca(2+) site.

It belongs to the glycosyl hydrolase 81 family. The cofactor is Ca(2+). It depends on Mg(2+) as a cofactor.

It is found in the secreted. The catalysed reaction is Hydrolysis of (1-&gt;3)-beta-D-glucosidic linkages in (1-&gt;3)-beta-D-glucans.. Its activity is regulated as follows. Inhibited by manganese, zinc, and copper ions. Functionally, cleaves internal linkages in 1,3-beta-glucan. May contribute to plant biomass degradation. The chain is Glucan endo-1,3-beta-D-glucosidase from Acetivibrio thermocellus (strain ATCC 27405 / DSM 1237 / JCM 9322 / NBRC 103400 / NCIMB 10682 / NRRL B-4536 / VPI 7372) (Clostridium thermocellum).